The sequence spans 171 residues: MLSHLVVGQGLYYGDSIFYAVCFLLLMWIIKVLAWKPVTKMMQDRADKISNDIDSAEKSRNDAAELVQKRQAALASSRSEAQTIVNDAKANGQQQREQIVTQAQADVQTLKQNAQKDIEQERQDALSNARNYVADLSIEIASKIIQRELKADDQKALIDSYIEGLGKQHES.

A helical membrane pass occupies residues 10–30 (GLYYGDSIFYAVCFLLLMWII).

This sequence belongs to the ATPase B chain family. In terms of assembly, F-type ATPases have 2 components, F(1) - the catalytic core - and F(0) - the membrane proton channel. F(1) has five subunits: alpha(3), beta(3), gamma(1), delta(1), epsilon(1). F(0) has three main subunits: a(1), b(2) and c(10-14). The alpha and beta chains form an alternating ring which encloses part of the gamma chain. F(1) is attached to F(0) by a central stalk formed by the gamma and epsilon chains, while a peripheral stalk is formed by the delta and b chains.

It is found in the cell membrane. Its function is as follows. F(1)F(0) ATP synthase produces ATP from ADP in the presence of a proton or sodium gradient. F-type ATPases consist of two structural domains, F(1) containing the extramembraneous catalytic core and F(0) containing the membrane proton channel, linked together by a central stalk and a peripheral stalk. During catalysis, ATP synthesis in the catalytic domain of F(1) is coupled via a rotary mechanism of the central stalk subunits to proton translocation. Component of the F(0) channel, it forms part of the peripheral stalk, linking F(1) to F(0). This chain is ATP synthase subunit b, found in Levilactobacillus brevis (strain ATCC 367 / BCRC 12310 / CIP 105137 / JCM 1170 / LMG 11437 / NCIMB 947 / NCTC 947) (Lactobacillus brevis).